We begin with the raw amino-acid sequence, 132 residues long: Spermatogenesis-associated protein 33 (132 aa).

The interaction with ATG16L1 stretch occupies residues M1–S60. The tract at residues M1–I81 is disordered. The span at K24–Q42 shows a compositional bias: basic and acidic residues. The interaction with VDAC2 stretch occupies residues S61–E132. Positions P79–T84 match the PQIIIT motif. The residue at position 87 (S87) is a Phosphoserine. Residues D110–E132 are disordered.

Interacts (via PQIIIT motif) with PPP3R2 and PPP3CC. Interacts with VDAC2. Interacts with ATG16L1 (via WD repeats). Interacts with PPP3R1, PPP3CA and PPP3CB. As to expression, predominantly expressed in the testis (at protein level). Expressed in the sperm midpiece (at protein level).

It is found in the cytoplasm. The protein localises to the cytosol. The protein resides in the nucleus. It localises to the mitochondrion. Functionally, plays an important role in sperm motility and male fertility. Required for sperm midpiece flexibility and for the localization of sperm calcineurin to the mitochondria. Promotes mitophagy as well as acts as an autophagy mediator in male germline cells. Links damaged mitochondria to autophagosomes via its binding to the outer mitochondrial membrane protein VDAC2, as well as to key autophagy machinery component ATG16L1. This chain is Spermatogenesis-associated protein 33 (Spata33), found in Mus musculus (Mouse).